A 235-amino-acid polypeptide reads, in one-letter code: Nucleoside diphosphate kinase 4, chloroplastic (235 aa).

ATP is bound by residues Lys-93, Phe-141, Arg-169, Thr-175, Arg-186, and Asn-196. His-199 serves as the catalytic Pros-phosphohistidine intermediate.

Belongs to the NDK family. Homohexamer. It depends on Mg(2+) as a cofactor.

It is found in the plastid. It localises to the chloroplast thylakoid lumen. It catalyses the reaction a 2'-deoxyribonucleoside 5'-diphosphate + ATP = a 2'-deoxyribonucleoside 5'-triphosphate + ADP. The enzyme catalyses a ribonucleoside 5'-diphosphate + ATP = a ribonucleoside 5'-triphosphate + ADP. Its function is as follows. Major role in the synthesis of nucleoside triphosphates other than ATP. The ATP gamma phosphate is transferred to the NDP beta phosphate via a ping-pong mechanism, using a phosphorylated active-site intermediate. Shows the highest specificity towards GDP. This is Nucleoside diphosphate kinase 4, chloroplastic (NDK4) from Spinacia oleracea (Spinach).